The sequence spans 291 residues: Tyrosine-protein kinase PtkA (291 aa).

The tract at residues 1 to 79 (MSSPRERRPA…RRASSPGESP (79 aa)) is disordered. A compositionally biased stretch (polar residues) spans 23 to 60 (HQTSRSSPDTTAPTGSGLSNRFVNDNGIVTDTTASGTN). Y262 carries the post-translational modification Phosphotyrosine.

The protein belongs to the HAD-like hydrolase superfamily. CbbY/CbbZ/Gph/YieH family. In terms of assembly, interacts with PtpA. Post-translationally, autophosphorylated.

The catalysed reaction is L-tyrosyl-[protein] + ATP = O-phospho-L-tyrosyl-[protein] + ADP + H(+). Its function is as follows. Required for growth within macrophages. Catalyzes the phosphorylation of PtpA on the tyrosine residues at positions 128 and 129, thereby increasing PtpA phosphatase activity and promoting pathogenicity. This Mycobacterium bovis (strain ATCC BAA-935 / AF2122/97) protein is Tyrosine-protein kinase PtkA.